A 150-amino-acid polypeptide reads, in one-letter code: Large ribosomal subunit protein bL9 (150 aa).

It belongs to the bacterial ribosomal protein bL9 family.

Binds to the 23S rRNA. The chain is Large ribosomal subunit protein bL9 from Burkholderia pseudomallei (strain 668).